The primary structure comprises 508 residues: Endoglucanase 6 (508 aa).

Positions 1–33 are cleaved as a signal peptide; it reads MLAASLRVEAVAVVAAAVLVLLLSPAAVVVVAG. Asp-89 (nucleophile) is an active-site residue. Active-site residues include His-419, Asp-471, and Glu-480.

It belongs to the glycosyl hydrolase 9 (cellulase E) family.

It localises to the secreted. It catalyses the reaction Endohydrolysis of (1-&gt;4)-beta-D-glucosidic linkages in cellulose, lichenin and cereal beta-D-glucans.. The chain is Endoglucanase 6 from Oryza sativa subsp. japonica (Rice).